A 125-amino-acid chain; its full sequence is Fluoride-specific ion channel FluC (125 aa).

The next 4 helical transmembrane spans lie at Phe7–Val27, Gly36–Ser56, Pro63–Phe83, and Phe96–Cys116. Residues Gly75 and Thr78 each coordinate Na(+).

It belongs to the fluoride channel Fluc/FEX (TC 1.A.43) family.

The protein localises to the cell inner membrane. It catalyses the reaction fluoride(in) = fluoride(out). With respect to regulation, na(+) is not transported, but it plays an essential structural role and its presence is essential for fluoride channel function. Fluoride-specific ion channel. Important for reducing fluoride concentration in the cell, thus reducing its toxicity. The polypeptide is Fluoride-specific ion channel FluC (Elusimicrobium minutum (strain Pei191)).